Reading from the N-terminus, the 267-residue chain is Acyl-[acyl-carrier-protein]--UDP-N-acetylglucosamine O-acyltransferase (267 aa).

The protein belongs to the transferase hexapeptide repeat family. LpxA subfamily. In terms of assembly, homotrimer.

The protein localises to the cytoplasm. The catalysed reaction is a (3R)-hydroxyacyl-[ACP] + UDP-N-acetyl-alpha-D-glucosamine = a UDP-3-O-[(3R)-3-hydroxyacyl]-N-acetyl-alpha-D-glucosamine + holo-[ACP]. It participates in glycolipid biosynthesis; lipid IV(A) biosynthesis; lipid IV(A) from (3R)-3-hydroxytetradecanoyl-[acyl-carrier-protein] and UDP-N-acetyl-alpha-D-glucosamine: step 1/6. Involved in the biosynthesis of lipid A, a phosphorylated glycolipid that anchors the lipopolysaccharide to the outer membrane of the cell. The protein is Acyl-[acyl-carrier-protein]--UDP-N-acetylglucosamine O-acyltransferase of Cupriavidus necator (strain ATCC 17699 / DSM 428 / KCTC 22496 / NCIMB 10442 / H16 / Stanier 337) (Ralstonia eutropha).